Here is a 477-residue protein sequence, read N- to C-terminus: Octopamine receptor (477 aa).

Residues 1 to 55 (MGQAATHVDANYTLINYTEEVIEDDRDACAVADDPKYPSSFGITLAVPEWEAICT) lie on the Extracellular side of the membrane. 2 N-linked (GlcNAc...) asparagine glycosylation sites follow: Asn11 and Asn16. The helical transmembrane segment at 56 to 78 (AIVLTLIIISTIVGNILVILSVF) threads the bilayer. The Cytoplasmic portion of the chain corresponds to 79 to 88 (TYKPLRIVQN). A helical transmembrane segment spans residues 89-110 (FFIVSLAVADLTVAILVLPLNV). Residues 111–127 (AYSILGQWVFGIYVCKM) lie on the Extracellular side of the membrane. The helical transmembrane segment at 128–148 (WLTCDIMCCTSSILNLCAIAL) threads the bilayer. Over 149–168 (DRYWAITDPINYAQKRTLER) the chain is Cytoplasmic. Residues 169–191 (VLLMIGVVWVLSLIISSPPLLGW) traverse the membrane as a helical segment. The Extracellular segment spans residues 192–216 (NDWPDVFEPDTPCRLTSQPGFVIFS). Residues 217-238 (SSGSFYIPLVIMTVVYFEIYLA) traverse the membrane as a helical segment. Residues 239-405 (TKKRLRDRAK…LTRERRAART (167 aa)) lie on the Cytoplasmic side of the membrane. Disordered regions lie at residues 256–317 (SSGQ…SKDD) and 334–358 (VTDM…THED). Composition is skewed to basic and acidic residues over residues 263 to 272 (NNKDDHHDQD) and 279 to 295 (NHNE…DNEK). Residues 296-312 (KKRTRKLTPKKKPKRKY) are compositionally biased toward basic residues. The helical transmembrane segment at 406–427 (LGIIMGVFVVCWLPFFVIYLVI) threads the bilayer. Residues 428–439 (PFCASCCLSNKF) are Extracellular-facing. The chain crosses the membrane as a helical span at residues 440–460 (INFITWLGYCNSALNPLIYTI). The Cytoplasmic segment spans residues 461–477 (FNMDFRRAFKKLLCMKP).

The protein belongs to the G-protein coupled receptor 1 family.

It is found in the cell membrane. In terms of biological role, receptor for octopamine. Octopamine (OA) is a neurotransmitter, neurohormone, and neuromodulator in invertebrates. The activity of this receptor is mediated by G proteins which activate adenylyl cyclase. The protein is Octopamine receptor of Heliothis virescens (Tobacco budworm moth).